A 678-amino-acid chain; its full sequence is MTKNLLVELGLEELPAYVVTPSEKQLGEKMAAFLGENRLSYESIQTFSTPRRLAVRVLGLADQQTDLTEDFKGPSKKIALDADGNFSKAAQGFVRGKGLTVDDIEFREVKGEEYVYVTKHEAGKSAKEVLAGIPEVLASLTFPVSMHWANNSFEYIRPVHTLIVLLGDEALELDFLGIKSGRVSRGHRFLGHEVEITNADSYEEDLRTVYVIADSKERENMIREQIKAIEAEQGVQVQIEEGLLNEVLNLVEYPTTFMGGFDTKYLDVPEDVLVTSMETHQRYFVVRDLDGRLKPNFISVRNGNAEHLENVVRGNEKVLVARLEDGEFFWREDQKLKIEDLVAKLANVTFHEKIGSLSEHMARAGVIAASLAEKAGLTAEEKAAVARAAEIYKFDLLTGMVGEFDELQGIMGEKYALLAGEDEAVATAIREHYLPDSADGALPETKVGAILALADKLDTLLSFFSVGLIPSGSNDPYALRRATQGIVRILDAFGWHIPMDELIDSLYGLSFDSLSYDNQAEVIRFIKARVDKMMGSTPKDIKEAVLSGSNFVVADMLEAAEALSEAAKTDGYKAAVESLSRAFNLAEKADTSVAVDASLFENDQEKALAQVAESLELTGSASDKLAQLFVLSPVIDAFFDNTMVMADDVAVKNNRLALLSALVAKAKTVAAFNQLNTK.

The protein belongs to the class-II aminoacyl-tRNA synthetase family. In terms of assembly, tetramer of two alpha and two beta subunits.

Its subcellular location is the cytoplasm. The enzyme catalyses tRNA(Gly) + glycine + ATP = glycyl-tRNA(Gly) + AMP + diphosphate. In Streptococcus thermophilus (strain ATCC BAA-491 / LMD-9), this protein is Glycine--tRNA ligase beta subunit.